A 187-amino-acid chain; its full sequence is Photosystem I assembly protein Ycf4 (187 aa).

The next 2 membrane-spanning stretches (helical) occupy residues 23–43 (INYF…IVGI) and 70–90 (FYGI…ILGV).

It belongs to the Ycf4 family.

It localises to the plastid. It is found in the chloroplast thylakoid membrane. In terms of biological role, seems to be required for the assembly of the photosystem I complex. The chain is Photosystem I assembly protein Ycf4 from Chara vulgaris (Common stonewort).